The sequence spans 225 residues: NAD(P)H-quinone oxidoreductase subunit K, chloroplastic (225 aa).

Positions 43, 44, 108, and 139 each coordinate [4Fe-4S] cluster.

This sequence belongs to the complex I 20 kDa subunit family. NDH is composed of at least 16 different subunits, 5 of which are encoded in the nucleus. [4Fe-4S] cluster serves as cofactor.

Its subcellular location is the plastid. The protein resides in the chloroplast thylakoid membrane. It catalyses the reaction a plastoquinone + NADH + (n+1) H(+)(in) = a plastoquinol + NAD(+) + n H(+)(out). It carries out the reaction a plastoquinone + NADPH + (n+1) H(+)(in) = a plastoquinol + NADP(+) + n H(+)(out). Its function is as follows. NDH shuttles electrons from NAD(P)H:plastoquinone, via FMN and iron-sulfur (Fe-S) centers, to quinones in the photosynthetic chain and possibly in a chloroplast respiratory chain. The immediate electron acceptor for the enzyme in this species is believed to be plastoquinone. Couples the redox reaction to proton translocation, and thus conserves the redox energy in a proton gradient. This chain is NAD(P)H-quinone oxidoreductase subunit K, chloroplastic, found in Populus trichocarpa (Western balsam poplar).